Consider the following 150-residue polypeptide: L-alanine exporter AlaE (150 aa).

4 helical membrane-spanning segments follow: residues 17–37, 48–68, 86–106, and 111–131; these read FAMV…VSGM, LSIP…DYVL, LVAY…TVGA, and IITA…LYGY.

Belongs to the AlaE exporter family.

It is found in the cell inner membrane. In terms of biological role, exports L-alanine. The chain is L-alanine exporter AlaE from Vibrio cholerae serotype O1 (strain ATCC 39315 / El Tor Inaba N16961).